The primary structure comprises 442 residues: Protein PHYTOCHROME KINASE SUBSTRATE 2 (442 aa).

The disordered stretch occupies residues 110 to 130 (IFVGPKQSSKNSSETPSLRSE). Over residues 121–130 (SSETPSLRSE) the composition is skewed to low complexity. Phosphoserine is present on residues serine 239 and serine 245. Residues 394-442 (VSGDSYTSMNRTPSYVPRFPVEANPTSTETRRRISSSSVSHTQSPFLYT) form a disordered region. Positions 397 to 406 (DSYTSMNRTP) are enriched in polar residues. Over residues 428–442 (SSSSVSHTQSPFLYT) the composition is skewed to low complexity.

This sequence belongs to the PKS family. In terms of assembly, interacts with PKS1, RPT3, PHOT1 and PHOT2. As to expression, expressed in leaves, with the strongest expression on edges of the laminas. Not found in roots.

It localises to the cell membrane. Acts predominantly in the phot1 pathway. Involved in the leaf positioning and also in the phot2 pathway controlling the leaf flattening. Component of the network that modulates the very low-fluence response (VLFR) branch of phyA signaling. Regulates phytochrome-mediated photomorphogenesis and hypocotyl phototropism. May act by controlling auxin homeostasis. This Arabidopsis thaliana (Mouse-ear cress) protein is Protein PHYTOCHROME KINASE SUBSTRATE 2 (PKS2).